A 381-amino-acid polypeptide reads, in one-letter code: Creatine kinase M-type (381 aa).

The 88-residue stretch at 11 to 98 folds into the Phosphagen kinase N-terminal domain; it reads KLNYSAAEEF…FDPVIEDRHG (88 aa). In terms of domain architecture, Phosphagen kinase C-terminal spans 125–367; sequence YVLSSRVRTG…KLMVEMEKRL (243 aa). ATP contacts are provided by residues 128–132, histidine 191, arginine 236, arginine 292, 320–325, and aspartate 335; these read SSRVR and RGTGGV.

It belongs to the ATP:guanido phosphotransferase family. As to quaternary structure, dimer of identical or non-identical chains. With MM being the major form in skeletal muscle and myocardium, MB existing in myocardium, and BB existing in many tissues, especially brain.

The protein resides in the cytoplasm. It catalyses the reaction creatine + ATP = N-phosphocreatine + ADP + H(+). Its function is as follows. Reversibly catalyzes the transfer of phosphate between ATP and various phosphogens (e.g. creatine phosphate). Creatine kinase isoenzymes play a central role in energy transduction in tissues with large, fluctuating energy demands, such as skeletal muscle, heart, brain and spermatozoa. The protein is Creatine kinase M-type of Torpedo marmorata (Marbled electric ray).